A 216-amino-acid chain; its full sequence is Adenylate kinase (216 aa).

Position 10–15 (10–15 (GAGKGT)) interacts with ATP. Residues 30–59 (STGDMLRAAVKAGTPLGLELKKVMDAGQLV) are NMP. Residues T31, R36, 57–59 (QLV), 85–88 (GFPR), and Q92 contribute to the AMP site. Residues 122–159 (GRRVHLASGRTYHIQYNPPKVEGKDDETGEDLIQRDDD) form an LID region. ATP is bound by residues R123 and 132 to 133 (TY). Residues R156 and R167 each contribute to the AMP site. G202 contributes to the ATP binding site.

It belongs to the adenylate kinase family. As to quaternary structure, monomer.

The protein resides in the cytoplasm. It carries out the reaction AMP + ATP = 2 ADP. Its pathway is purine metabolism; AMP biosynthesis via salvage pathway; AMP from ADP: step 1/1. In terms of biological role, catalyzes the reversible transfer of the terminal phosphate group between ATP and AMP. Plays an important role in cellular energy homeostasis and in adenine nucleotide metabolism. In Pseudomonas putida (strain ATCC 700007 / DSM 6899 / JCM 31910 / BCRC 17059 / LMG 24140 / F1), this protein is Adenylate kinase.